The following is a 476-amino-acid chain: Bifunctional protein HldE (476 aa).

Residues 1–318 (MAQYSAEFKQ…ENAIHARPET (318 aa)) are ribokinase. Residue 195–198 (NMSE) coordinates ATP. The active site involves aspartate 264. Positions 344-476 (MTNGCFDILH…VIEKIKLLKD (133 aa)) are cytidylyltransferase.

This sequence in the N-terminal section; belongs to the carbohydrate kinase PfkB family. The protein in the C-terminal section; belongs to the cytidylyltransferase family. Homodimer.

The catalysed reaction is D-glycero-beta-D-manno-heptose 7-phosphate + ATP = D-glycero-beta-D-manno-heptose 1,7-bisphosphate + ADP + H(+). The enzyme catalyses D-glycero-beta-D-manno-heptose 1-phosphate + ATP + H(+) = ADP-D-glycero-beta-D-manno-heptose + diphosphate. Its pathway is nucleotide-sugar biosynthesis; ADP-L-glycero-beta-D-manno-heptose biosynthesis; ADP-L-glycero-beta-D-manno-heptose from D-glycero-beta-D-manno-heptose 7-phosphate: step 1/4. It functions in the pathway nucleotide-sugar biosynthesis; ADP-L-glycero-beta-D-manno-heptose biosynthesis; ADP-L-glycero-beta-D-manno-heptose from D-glycero-beta-D-manno-heptose 7-phosphate: step 3/4. Functionally, catalyzes the phosphorylation of D-glycero-D-manno-heptose 7-phosphate at the C-1 position to selectively form D-glycero-beta-D-manno-heptose-1,7-bisphosphate. Catalyzes the ADP transfer from ATP to D-glycero-beta-D-manno-heptose 1-phosphate, yielding ADP-D-glycero-beta-D-manno-heptose. The protein is Bifunctional protein HldE of Haemophilus influenzae (strain PittGG).